A 163-amino-acid polypeptide reads, in one-letter code: MPSFDIVSEITLHEVRNAVENANRDLTNRWDFRNVQAAIELNEKNESIKVSSESDFQVEQLVDILRNACIKRGIDSGSLDIPTEYEHSGKTYSKEIKLKQGIASEMAKKITKLIKDSKLKVQTQIQGEQVRVTGKSRDDLQAVIQLVKGAELGQPFQFNNFRD.

Belongs to the YajQ family.

Nucleotide-binding protein. This chain is Nucleotide-binding protein PM1656, found in Pasteurella multocida (strain Pm70).